A 611-amino-acid chain; its full sequence is Dihydroxy-acid dehydratase (611 aa).

D81 lines the Mg(2+) pocket. C122 serves as a coordination point for [2Fe-2S] cluster. Mg(2+) contacts are provided by D123 and K124. At K124 the chain carries N6-carboxylysine. C195 contributes to the [2Fe-2S] cluster binding site. Position 491 (E491) interacts with Mg(2+). The active-site Proton acceptor is the S517.

Belongs to the IlvD/Edd family. As to quaternary structure, homodimer. [2Fe-2S] cluster serves as cofactor. It depends on Mg(2+) as a cofactor.

The enzyme catalyses (2R)-2,3-dihydroxy-3-methylbutanoate = 3-methyl-2-oxobutanoate + H2O. It catalyses the reaction (2R,3R)-2,3-dihydroxy-3-methylpentanoate = (S)-3-methyl-2-oxopentanoate + H2O. The protein operates within amino-acid biosynthesis; L-isoleucine biosynthesis; L-isoleucine from 2-oxobutanoate: step 3/4. It participates in amino-acid biosynthesis; L-valine biosynthesis; L-valine from pyruvate: step 3/4. Functionally, functions in the biosynthesis of branched-chain amino acids. Catalyzes the dehydration of (2R,3R)-2,3-dihydroxy-3-methylpentanoate (2,3-dihydroxy-3-methylvalerate) into 2-oxo-3-methylpentanoate (2-oxo-3-methylvalerate) and of (2R)-2,3-dihydroxy-3-methylbutanoate (2,3-dihydroxyisovalerate) into 2-oxo-3-methylbutanoate (2-oxoisovalerate), the penultimate precursor to L-isoleucine and L-valine, respectively. The chain is Dihydroxy-acid dehydratase from Allorhizobium ampelinum (strain ATCC BAA-846 / DSM 112012 / S4) (Agrobacterium vitis (strain S4)).